Reading from the N-terminus, the 126-residue chain is Methylglyoxal synthase (126 aa).

The 126-residue stretch at 1–126 (MEKKIALIAH…LIKGLESLIF (126 aa)) folds into the MGS-like domain. Substrate is bound by residues histidine 10, lysine 14, 36-39 (TGTT), and 56-57 (SG). Catalysis depends on aspartate 62, which acts as the Proton donor/acceptor. Histidine 89 serves as a coordination point for substrate.

It belongs to the methylglyoxal synthase family.

It catalyses the reaction dihydroxyacetone phosphate = methylglyoxal + phosphate. Catalyzes the formation of methylglyoxal from dihydroxyacetone phosphate. The polypeptide is Methylglyoxal synthase (Borreliella burgdorferi (strain ATCC 35210 / DSM 4680 / CIP 102532 / B31) (Borrelia burgdorferi)).